Consider the following 685-residue polypeptide: Probable cysteine desulfurase (685 aa).

A cargo-loading domain region spans residues 1–282 (MTRSPCSTTS…RDEHEVFDVA (282 aa)). Disordered regions lie at residues 48 to 135 (SIRP…TSAG) and 162 to 185 (PTPA…VPDT). Residues 71 to 85 (ATAATSAGRTAAGTA) are compositionally biased toward low complexity. Positions 102-121 (LPPPASPAPEAPPQAAPPAP) are enriched in pro residues. Low complexity predominate over residues 122 to 135 (RGSAPDATAATSAG). Positions 164–178 (PAGPEAPPQSAPPAP) are enriched in pro residues. The residue at position 502 (Lys502) is an N6-(pyridoxal phosphate)lysine. Cys640 (cysteine persulfide intermediate) is an active-site residue.

The protein belongs to the class-V pyridoxal-phosphate-dependent aminotransferase family. Csd subfamily. In terms of assembly, isolated from bacteria in a complex with encapsulin 2A (AC I3NID5), strongly suggesting it is found in a type 2A encapsulin nanocompartment. There are 1-2 copies of this protein in each encapsulin shell. Pyridoxal 5'-phosphate serves as cofactor.

The protein localises to the encapsulin nanocompartment. It localises to the cell membrane. It carries out the reaction (sulfur carrier)-H + L-cysteine = (sulfur carrier)-SH + L-alanine. Cargo protein of a type 2A encapsulin nanocompartment involved in sulfur metabolism. Cysteine desulfurases mobilize the sulfur from L-cysteine to yield L-alanine, an essential step in sulfur metabolism for biosynthesis of a variety of sulfur-containing biomolecules. The chain is Probable cysteine desulfurase from Mycolicibacterium paratuberculosis (strain ATCC BAA-968 / K-10) (Mycobacterium paratuberculosis).